We begin with the raw amino-acid sequence, 435 residues long: Glutamate-1-semialdehyde 2,1-aminomutase (435 aa).

N6-(pyridoxal phosphate)lysine is present on Lys-266.

This sequence belongs to the class-III pyridoxal-phosphate-dependent aminotransferase family. HemL subfamily. As to quaternary structure, homodimer. It depends on pyridoxal 5'-phosphate as a cofactor.

Its subcellular location is the cytoplasm. The catalysed reaction is (S)-4-amino-5-oxopentanoate = 5-aminolevulinate. It functions in the pathway porphyrin-containing compound metabolism; protoporphyrin-IX biosynthesis; 5-aminolevulinate from L-glutamyl-tRNA(Glu): step 2/2. The protein is Glutamate-1-semialdehyde 2,1-aminomutase of Coxiella burnetii (strain RSA 331 / Henzerling II).